The following is a 999-amino-acid chain: MLYCLILLLCLSSTYLPSLSLNQDATILRQAKLGLSDPAQSLSSWSDNNDVTPCKWLGVSCDATSNVVSVDLSSFMLVGPFPSILCHLPSLHSLSLYNNSINGSLSADDFDTCHNLISLDLSENLLVGSIPKSLPFNLPNLKFLEISGNNLSDTIPSSFGEFRKLESLNLAGNFLSGTIPASLGNVTTLKELKLAYNLFSPSQIPSQLGNLTELQVLWLAGCNLVGPIPPSLSRLTSLVNLDLTFNQLTGSIPSWITQLKTVEQIELFNNSFSGELPESMGNMTTLKRFDASMNKLTGKIPDNLNLLNLESLNLFENMLEGPLPESITRSKTLSELKLFNNRLTGVLPSQLGANSPLQYVDLSYNRFSGEIPANVCGEGKLEYLILIDNSFSGEISNNLGKCKSLTRVRLSNNKLSGQIPHGFWGLPRLSLLELSDNSFTGSIPKTIIGAKNLSNLRISKNRFSGSIPNEIGSLNGIIEISGAENDFSGEIPESLVKLKQLSRLDLSKNQLSGEIPRELRGWKNLNELNLANNHLSGEIPKEVGILPVLNYLDLSSNQFSGEIPLELQNLKLNVLNLSYNHLSGKIPPLYANKIYAHDFIGNPGLCVDLDGLCRKITRSKNIGYVWILLTIFLLAGLVFVVGIVMFIAKCRKLRALKSSTLAASKWRSFHKLHFSEHEIADCLDEKNVIGFGSSGKVYKVELRGGEVVAVKKLNKSVKGGDDEYSSDSLNRDVFAAEVETLGTIRHKSIVRLWCCCSSGDCKLLVYEYMPNGSLADVLHGDRKGGVVLGWPERLRIALDAAEGLSYLHHDCVPPIVHRDVKSSNILLDSDYGAKVADFGIAKVGQMSGSKTPEAMSGIAGSCGYIAPEYVYTLRVNEKSDIYSFGVVLLELVTGKQPTDSELGDKDMAKWVCTALDKCGLEPVIDPKLDLKFKEEISKVIHIGLLCTSPLPLNRPSMRKVVIMLQEVSGAVPCSSPNTSKRSKTGGKLSPYYTEDLNSV.

The first 14 residues, 1 to 14 (MLYCLILLLCLSST), serve as a signal peptide directing secretion. Residues 15–621 (YLPSLSLNQD…LCRKITRSKN (607 aa)) are Extracellular-facing. LRR repeat units lie at residues 90–112 (SLHS…DFDT), 115–137 (NLIS…LPFN), 140–161 (NLKF…SFGE), 164–186 (KLES…LGNV), and 188–208 (TLKE…PSQL). N98 and N102 each carry an N-linked (GlcNAc...) asparagine glycan. N-linked (GlcNAc...) asparagine glycosylation is found at N150 and N185. Residue N210 is glycosylated (N-linked (GlcNAc...) asparagine). 2 LRR repeats span residues 213–236 (ELQV…SRLT) and 237–259 (SLVN…ITQL). N269 and N282 each carry an N-linked (GlcNAc...) asparagine glycan. 12 LRR repeats span residues 285 to 307 (TLKR…LNLL), 308 to 330 (NLES…ITRS), 332 to 353 (TLSE…QLGA), 356 to 378 (PLQY…VCGE), 380 to 402 (KLEY…LGKC), 404 to 427 (SLTR…WGLP), 428 to 450 (RLSL…IIGA), 452 to 474 (NLSN…IGSL), 500 to 523 (QLSR…RGWK), 524 to 546 (NLNE…VGIL), 548 to 569 (VLNY…ELQN), and 571 to 593 (KLNV…YANK). An N-linked (GlcNAc...) asparagine glycan is attached at N452. N576 is a glycosylation site (N-linked (GlcNAc...) asparagine). The helical transmembrane segment at 622-641 (IGYVWILLTIFLLAGLVFVV) threads the bilayer. The Cytoplasmic segment spans residues 642–999 (GIVMFIAKCR…PYYTEDLNSV (358 aa)). The 286-residue stretch at 683-968 (LDEKNVIGFG…KVVIMLQEVS (286 aa)) folds into the Protein kinase domain. ATP contacts are provided by residues 689–697 (IGFGSSGKV) and K711. 2 positions are modified to phosphotyrosine: Y766 and Y806. The Proton acceptor role is filled by D819. Residue S856 is modified to Phosphoserine. Residues Y864 and Y871 each carry the phosphotyrosine modification. A Phosphothreonine modification is found at T872. Residues 972 to 999 (PCSSPNTSKRSKTGGKLSPYYTEDLNSV) form a disordered region.

This sequence belongs to the protein kinase superfamily. Ser/Thr protein kinase family. Interacts with CST. Binds to IDA. Requires Mg(2+) as cofactor. Mn(2+) serves as cofactor. Post-translationally, autophosphorylated on Ser, Thr and Tyr residues. In terms of tissue distribution, expressed in roots and rosettes. Expressed at the base of petioles and pedicels, and in the abscission zones of the floral organs.

The protein resides in the cell membrane. It catalyses the reaction L-seryl-[protein] + ATP = O-phospho-L-seryl-[protein] + ADP + H(+). The catalysed reaction is L-threonyl-[protein] + ATP = O-phospho-L-threonyl-[protein] + ADP + H(+). It carries out the reaction L-tyrosyl-[protein] + ATP = O-phospho-L-tyrosyl-[protein] + ADP + H(+). In terms of biological role, receptor with a dual specificity kinase activity acting on both serine/threonine- and tyrosine-containing substrates that controls floral organ abscission. May interact with the 'INFLORESCENCE DEFICIENT IN ABSCISSION' (IDA) ligands family. This chain is Receptor-like protein kinase 5 (RLK5), found in Arabidopsis thaliana (Mouse-ear cress).